The sequence spans 583 residues: NudC domain-containing protein 1 (583 aa).

A Phosphoserine modification is found at Ser8. In terms of domain architecture, CS spans 273–361 (IKEPLYYWQQ…NEGLTWPELV (89 aa)). Ser388 carries the phosphoserine modification.

As to expression, isoform 1 is specifically expressed in leukemias and a variety of solid tumor cell lines and is also detected in testis and heart. Isoform 2 is predominantly expressed in testis and weakly expressed in tumor cells.

The protein resides in the cytoplasm. Its subcellular location is the nucleus. The protein is NudC domain-containing protein 1 of Homo sapiens (Human).